Consider the following 314-residue polypeptide: L-lactate dehydrogenase 1 (314 aa).

NAD(+)-binding positions include Val16, Asp37, Lys42, Tyr68, and 82-83 (GL). Residues Gln85, Arg91, and 123–126 (NPVD) each bind substrate. NAD(+) is bound by residues 121 to 123 (ATN) and Ser146. 151-154 (DSAR) contacts substrate. Beta-D-fructose 1,6-bisphosphate-binding residues include Arg156 and His171. Residue His178 is the Proton acceptor of the active site. At Tyr223 the chain carries Phosphotyrosine. Thr232 serves as a coordination point for substrate.

This sequence belongs to the LDH/MDH superfamily. LDH family. As to quaternary structure, homotetramer.

The protein localises to the cytoplasm. It catalyses the reaction (S)-lactate + NAD(+) = pyruvate + NADH + H(+). The protein operates within fermentation; pyruvate fermentation to lactate; (S)-lactate from pyruvate: step 1/1. With respect to regulation, allosterically activated by fructose 1,6-bisphosphate (FBP). Catalyzes the conversion of lactate to pyruvate. The sequence is that of L-lactate dehydrogenase 1 from Bacillus anthracis.